The chain runs to 1697 residues: Phosphatidylinositol 3-kinase 3 (1697 aa).

Disordered stretches follow at residues 57–91, 169–229, 244–279, 310–376, 398–428, and 440–504; these read RSINNNNNNNNNNNNNNNNNNNNNNNNNNNNTQPC, INNN…DSSI, KTTETKETSTGTSPLEKSPSKGFIISPKKPEEENEI, KKNN…NSVG, SWTSSKPTSSSIGFASSPQNNGKPLNISGSS, and DLLK…NNDE. Composition is skewed to low complexity over residues 60–87, 170–196, and 212–222; these read NNNNNNNNNNNNNNNNNNNNNNNNNNNN, NNNNNNNNNNNNNNNNNNNNNNNNNNN, and NNNSNNNNNIN. Low complexity-rich tracts occupy residues 312–374 and 398–408; these read NNNN…TTNS and SWTSSKPTSSS. Composition is skewed to polar residues over residues 409 to 428 and 444 to 456; these read IGFASSPQNNGKPLNISGSS and SPSSSPPTQSDIF. Low complexity predominate over residues 457–503; it reads NENNNNNNNNNNNNNNNNNNNNNNNNNNNNNNNNEELINNNNNNNND. The PI3K-RBD domain maps to 737–823; that stretch reads PEFFVIRVHL…KGEIDLTMVE (87 aa). The C2 PI3K-type domain occupies 888 to 1036; the sequence is VTENLQVRLL…QAIIIAFEFK (149 aa). The region spanning 1060–1238 is the PIK helical domain; sequence GNELPVVTME…RVLSSGFLRY (179 aa). The PI3K/PI4K catalytic domain occupies 1304–1581; it reads IPEKCKSMDS…LIHESIGTLT (278 aa). Positions 1310–1316 are G-loop; that stretch reads SMDSAKV. Residues 1447-1455 are catalytic loop; sequence GIGDRHNDN. The tract at residues 1466 to 1492 is activation loop; that stretch reads HIDFGHFLGNFKTFAGFQREKAPFVLT. Positions 1609-1625 are enriched in low complexity; the sequence is ASSLNLNKNKPSSQSKL. Residues 1609–1697 are disordered; it reads ASSLNLNKNK…DTEKENSIDK (89 aa). 5 tandem repeats follow at residues 1622–1626, 1627–1631, 1632–1636, 1642–1646, and 1647–1651. The interval 1622–1651 is 5 X 5 AA approximate repeats; sequence QSKLDLSRSDLSRSDSSRSDSSRLDLSRSD. Composition is skewed to basic and acidic residues over residues 1626–1681 and 1688–1697; these read DLSR…DKDN and DTEKENSIDK. The interval 1659 to 1672 is 7 X 2 AA tandem repeats of K-E; that stretch reads KEKEKEKEKEKEKE.

It belongs to the PI3/PI4-kinase family.

The enzyme catalyses a 1,2-diacyl-sn-glycero-3-phospho-(1D-myo-inositol) + ATP = a 1,2-diacyl-sn-glycero-3-phospho-(1D-myo-inositol-3-phosphate) + ADP + H(+). This is Phosphatidylinositol 3-kinase 3 (pikC) from Dictyostelium discoideum (Social amoeba).